A 206-amino-acid polypeptide reads, in one-letter code: Urease accessory protein UreG (206 aa).

14 to 21 provides a ligand contact to GTP; it reads GPVGSGKT.

This sequence belongs to the SIMIBI class G3E GTPase family. UreG subfamily. As to quaternary structure, homodimer. UreD, UreF and UreG form a complex that acts as a GTP-hydrolysis-dependent molecular chaperone, activating the urease apoprotein by helping to assemble the nickel containing metallocenter of UreC. The UreE protein probably delivers the nickel.

It is found in the cytoplasm. In terms of biological role, facilitates the functional incorporation of the urease nickel metallocenter. This process requires GTP hydrolysis, probably effectuated by UreG. The sequence is that of Urease accessory protein UreG from Aliivibrio fischeri (strain ATCC 700601 / ES114) (Vibrio fischeri).